A 321-amino-acid chain; its full sequence is Cytochrome c biogenesis protein CcsA (321 aa).

Helical transmembrane passes span 9 to 29, 44 to 64, 71 to 91, 98 to 118, 143 to 163, 225 to 245, 252 to 272, and 286 to 306; these read ILTHISFSIISVVITIQLMNL, GMIATFFSITGLLVTRWIYSG, LYESLIFLSWSFSIIHMVPYF, FSAITAPSAIFTQGFATSGLL, MLLSYAALLCGSLLSVALLVI, VISLGFIFLTIGILSGAVWAN, WNWDPKEIWAFITWAIFAIYL, and AIVASIGFLIIWICYFGVNLL.

Belongs to the CcmF/CycK/Ccl1/NrfE/CcsA family. May interact with Ccs1.

Its subcellular location is the plastid. The protein localises to the chloroplast thylakoid membrane. Functionally, required during biogenesis of c-type cytochromes (cytochrome c6 and cytochrome f) at the step of heme attachment. The protein is Cytochrome c biogenesis protein CcsA of Acorus calamus var. americanus (American sweet flag).